The chain runs to 882 residues: Nitrogen regulatory protein areA (882 aa).

Residues 1–13 (MSGLTLGGGGSGG) show a composition bias toward gly residues. Disordered regions lie at residues 1-75 (MSGL…PDSL), 139-191 (KRKE…LTSD), 228-257 (SRKD…SEFG), 325-344 (NNHS…FGLD), 394-422 (STDF…EHSM), 461-545 (NQDQ…DMNG), and 579-675 (MDTP…GPTT). The span at 48–59 (SDFSQLSDDFSF) shows a compositional bias: low complexity. Polar residues-rich tracts occupy residues 156-169 (NSVS…QLTS) and 177-191 (PTRQ…LTSD). Over residues 325 to 334 (NNHSSSHHNH) the composition is skewed to basic residues. 2 stretches are compositionally biased toward polar residues: residues 394 to 413 (STDF…STPQ) and 492 to 503 (QVLNPNDFSTGA). Residues 604–613 (VRNREQDPRR) show a composition bias toward basic and acidic residues. Positions 617–642 (ARTTSTPNTAQLLRQSMNANTSHTSP) are enriched in polar residues. Residues 676–700 (CTNCFTQTTPLWRRNPEGQPLCNAC) form a GATA-type zinc finger. The segment at 723 to 871 (RNRSSANSLA…NHSIAGGQGA (149 aa)) is disordered. Residues 745–759 (KNSVQQTTVTTPTSS) show a composition bias toward low complexity. The span at 795–811 (NPTTSSPGQSRGTSSVQ) shows a compositional bias: polar residues. Residues 848 to 861 (ALAPAMPPAAANPA) show a composition bias toward low complexity.

Its subcellular location is the nucleus. In terms of biological role, major nitrogen regulatory protein. Positively acting regulatory gene of nitrogen metabolite repression. The chain is Nitrogen regulatory protein areA (areA) from Aspergillus niger.